We begin with the raw amino-acid sequence, 798 residues long: Protocadherin beta-13 (798 aa).

The signal sequence occupies residues 1–28 (MEASGKLICRQRQVLFSFLLLGLSLAGA). Residues 29-690 (AEPRSYSVVE…AQADLLTVYL (662 aa)) are Extracellular-facing. Cadherin domains follow at residues 36 to 134 (VVEE…SPVF), 139 to 243 (MLVK…APEF), 248 to 348 (YRVQ…APEV), 353 to 451 (FTSP…APAF), and 456 to 561 (YTLF…SPFV). N-linked (GlcNAc...) asparagine glycosylation is found at N418 and N436. An N-linked (GlcNAc...) asparagine glycan is attached at N567. In terms of domain architecture, Cadherin 6 spans 568 to 671 (GSAPCTELVP…LVDGFSQPYL (104 aa)). Residues 691 to 711 (VVALASVSSLFLFSVLLFVAV) traverse the membrane as a helical segment. The Cytoplasmic portion of the chain corresponds to 712-798 (RLCRRSRAAS…FPNNFGFNIQ (87 aa)).

The protein localises to the cell membrane. In terms of biological role, potential calcium-dependent cell-adhesion protein. May be involved in the establishment and maintenance of specific neuronal connections in the brain. The sequence is that of Protocadherin beta-13 (PCDHB13) from Homo sapiens (Human).